The chain runs to 37 residues: Bactericidin B-2 (37 aa).

Position 37 is a glycine amide (Gly-37).

The protein belongs to the cecropin family.

It is found in the secreted. Functionally, cecropins have lytic and antibacterial activity against several Gram-positive and Gram-negative bacteria. In Manduca sexta (Tobacco hawkmoth), this protein is Bactericidin B-2.